A 229-amino-acid chain; its full sequence is DNA repair protein RecO (229 aa).

This sequence belongs to the RecO family.

Functionally, involved in DNA repair and RecF pathway recombination. The polypeptide is DNA repair protein RecO (Legionella pneumophila (strain Lens)).